We begin with the raw amino-acid sequence, 328 residues long: tRNA uridine(34) hydroxylase (328 aa).

The region spanning 130 to 224 is the Rhodanese domain; sequence LDKDTVVLDT…YGKDPEVQGE (95 aa). Cys184 acts as the Cysteine persulfide intermediate in catalysis.

The protein belongs to the TrhO family.

The catalysed reaction is uridine(34) in tRNA + AH2 + O2 = 5-hydroxyuridine(34) in tRNA + A + H2O. Functionally, catalyzes oxygen-dependent 5-hydroxyuridine (ho5U) modification at position 34 in tRNAs. The sequence is that of tRNA uridine(34) hydroxylase from Streptococcus pneumoniae (strain ATCC 700669 / Spain 23F-1).